The chain runs to 531 residues: NADH-quinone oxidoreductase subunit N (531 aa).

13 helical membrane-spanning segments follow: residues 13 to 33 (LAPI…EAFA), 45 to 65 (LALL…AEVI), 85 to 105 (PALA…LVIA), 150 to 170 (LFSV…TLFI), 200 to 220 (YFLL…LLYG), 242 to 262 (GLLV…VGAV), 289 to 309 (VAAF…MTWD), 310 to 330 (IQPF…VLAI), 339 to 359 (LAYS…AMSP), 365 to 385 (VFFY…LVAL), 415 to 435 (VATV…TSGF), 460 to 480 (ASAA…FTSP), and 496 to 516 (GFTA…GVWP).

Belongs to the complex I subunit 2 family. NDH-1 is composed of 14 different subunits. Subunits NuoA, H, J, K, L, M, N constitute the membrane sector of the complex.

Its subcellular location is the cell membrane. The enzyme catalyses a quinone + NADH + 5 H(+)(in) = a quinol + NAD(+) + 4 H(+)(out). Functionally, NDH-1 shuttles electrons from NADH, via FMN and iron-sulfur (Fe-S) centers, to quinones in the respiratory chain. The immediate electron acceptor for the enzyme in this species is believed to be a menaquinone. Couples the redox reaction to proton translocation (for every two electrons transferred, four hydrogen ions are translocated across the cytoplasmic membrane), and thus conserves the redox energy in a proton gradient. The protein is NADH-quinone oxidoreductase subunit N of Beutenbergia cavernae (strain ATCC BAA-8 / DSM 12333 / CCUG 43141 / JCM 11478 / NBRC 16432 / NCIMB 13614 / HKI 0122).